The chain runs to 931 residues: Protein unc-45 homolog B (931 aa).

TPR repeat units follow at residues 6–39 (AVQL…TKDK), 43–76 (ATLY…NSSD), and 77–110 (IKAL…EPRN). 3 ARM repeats span residues 169 to 208 (EAGA…GMCS), 211 to 250 (QARA…AIID), and 751 to 790 (DKLR…NMVL).

As to quaternary structure, interacts with HSP90 in an ATP-independent manner. Interacts with UBE4B; the interaction may target UNC45B for proteasomal degradation. As to expression, expressed in eye lens tissues. Expressed in muscle (at protein level).

The protein resides in the cytoplasm. Its subcellular location is the myofibril. It localises to the sarcomere. The protein localises to the z line. It is found in the a band. The protein resides in the perinuclear region. Its subcellular location is the cytosol. Its function is as follows. Acts as a co-chaperone for HSP90 and is required for proper folding of the myosin motor domain. Plays a role in sarcomere formation during muscle cell development. Is necessary for normal early lens development. This is Protein unc-45 homolog B from Homo sapiens (Human).